Reading from the N-terminus, the 68-residue chain is MVYYPELSVWVSQEPFPNKDMEGRLPKGRLPVPKEVNRKKNDETNAASLTPLGSSELRSPRISYLHSF.

The segment at 21–54 (MEGRLPKGRLPVPKEVNRKKNDETNAASLTPLGS) is disordered. Positions 44 to 54 (TNAASLTPLGS) are enriched in polar residues.

As to quaternary structure, interacts with the latency-associated peptides (LAP) of TGFB1 and TGFB2; the interaction results in a decrease in TGFB autoinduction. Interacts with FLNA. Post-translationally, phosphorylated on Ser-59. Phosphorylation decreases stability and activity.

The protein localises to the cytoplasm. In terms of biological role, may have roles in neural function and cellular differentiation. Ectopic expression promotes axonal regeneration, induces differentiation of fibroblast into myofibroblast, induces myofibroblast ameboid migration, augments motility of gliomas, and increases retinoic-acid regulation of lipid-droplet biogenesis. Down-regulates the expression of TGFB1 and TGFB2 but not of TGFB3. May play a role in the regulation of alveolar generation. The polypeptide is Neuronal regeneration-related protein (NREP) (Pongo abelii (Sumatran orangutan)).